We begin with the raw amino-acid sequence, 944 residues long: uncharacterized protein (944 aa).

This is an uncharacterized protein from Ureaplasma parvum serovar 3 (strain ATCC 700970).